A 256-amino-acid chain; its full sequence is Ciliary microtubule associated protein 1A (256 aa).

3 STPGR repeats span residues 66-92 (PGPG…IYGR), 181-206 (PGPG…MTAR), and 217-242 (PGPG…FGIR).

This sequence belongs to the CIMAP family.

The protein localises to the cytoplasm. It localises to the cytoskeleton. The protein resides in the flagellum axoneme. Outer dense fibers are filamentous structures located on the outside of the axoneme in the midpiece and principal piece of the mammalian sperm tail. May help to maintain the passive elastic structures and elastic recoil of the sperm tail. The polypeptide is Ciliary microtubule associated protein 1A (cimap1a) (Xenopus tropicalis (Western clawed frog)).